We begin with the raw amino-acid sequence, 206 residues long: Protein Ta0236 (206 aa).

The region spanning 16–205 (DIGTKAVRLA…EKDPEGVVEK (190 aa)) is the AMMECR1 domain.

This Thermoplasma acidophilum (strain ATCC 25905 / DSM 1728 / JCM 9062 / NBRC 15155 / AMRC-C165) protein is Protein Ta0236.